Reading from the N-terminus, the 624-residue chain is Adenine deaminase 1 (624 aa).

The protein belongs to the metallo-dependent hydrolases superfamily. Adenine deaminase family. Mn(2+) is required as a cofactor.

The catalysed reaction is adenine + H2O + H(+) = hypoxanthine + NH4(+). The sequence is that of Adenine deaminase 1 from Bradyrhizobium sp. (strain ORS 278).